A 522-amino-acid polypeptide reads, in one-letter code: MSRWKVVILCLLSFMFEIGHASFQCNPKTYDGAFLNIVCVCNATFCDEIEPIGEIAEGKAIVYRSSLDGDRLKRMSMKMKEKLRKNESVNVTITIDASERFQNIFGFGGAFTDSAGDQFVSLSETLQNYIVDSYFGKNGLEYNIGRVPIASCDFSTHEYSYDDVHDDFELKHFALPDEDLKLKIPFIKKAIEKTEGNIQLFASPWSAPGWMKVTGRMRGGGAMRNDKRVYQAYADYFFKFFEAYSSHAITFWGLTIQNEPSTGADMAWRWQTMNYTAETMRDFLKKYLGPKLKENKLTETLKVMVLDDGRGLLPGWADTIFNDPEATKYADGVAVHWYGNLYSPAVLLDITQRHHPTKFIFGTEACAGYFGHHGPIMGDWFRAESYADDIITDLNHHVTGWTDWNLCLDETGGPNWAYNVVDSPIIVNRTAQEFYKQPMFYALGHFSKFLPRGSTRVFTKIEGNLAVSATSVVIEGGRRATVILSKASNSLLTRIVDSSTGFSIVLNLPPRSIHTVIWKKRK.

A signal peptide spans 1–21 (MSRWKVVILCLLSFMFEIGHA). The active-site Proton donor is glutamate 259. Glutamate 364 acts as the Nucleophile in catalysis.

It belongs to the glycosyl hydrolase 30 family.

The enzyme catalyses a beta-D-glucosylceramide + H2O = an N-acyl-sphingoid base + D-glucose. It catalyses the reaction a beta-D-glucosyl-(1&lt;-&gt;1')-N-acylsphing-4-enine + H2O = an N-acylsphing-4-enine + D-glucose. The catalysed reaction is an N-acyl-1-beta-D-glucosyl-15-methylhexadecasphing-4-enine + H2O = an N-acyl-15-methylhexadecasphing-4-enine + D-glucose. It functions in the pathway lipid metabolism; sphingolipid metabolism. Functionally, glucosylceramidase that catalyzes the hydrolysis of glucosylceramides into free ceramides and glucose. C.elegans contain specific sphingoid bases, which are unique or different in structure compared to the sphingoid bases found in other animals. Two examples of these distinctive compounds are: 15-methylhexadecasphinganine and 15-methylhexadecasphing-4-enine. The polypeptide is Putative glucosylceramidase 3 (Caenorhabditis elegans).